Here is a 265-residue protein sequence, read N- to C-terminus: NAD kinase (265 aa).

D45 (proton acceptor) is an active-site residue. NAD(+)-binding positions include 45–46, 121–122, R147, D149, 160–165, A184, and Q222; these read DG, NE, and TAYSKS.

Belongs to the NAD kinase family. A divalent metal cation serves as cofactor.

It is found in the cytoplasm. It carries out the reaction NAD(+) + ATP = ADP + NADP(+) + H(+). Involved in the regulation of the intracellular balance of NAD and NADP, and is a key enzyme in the biosynthesis of NADP. Catalyzes specifically the phosphorylation on 2'-hydroxyl of the adenosine moiety of NAD to yield NADP. The polypeptide is NAD kinase (Lacticaseibacillus paracasei (strain ATCC 334 / BCRC 17002 / CCUG 31169 / CIP 107868 / KCTC 3260 / NRRL B-441) (Lactobacillus paracasei)).